A 388-amino-acid polypeptide reads, in one-letter code: Leucine aminopeptidase 1 (388 aa).

The N-terminal stretch at 1–19 (MKLPALLILGVAASTMVLA) is a signal peptide. Positions 20–88 (AIAPDQVPLN…LPKVFPTPAV (69 aa)) are excised as a propeptide. Asn96, Asn119, Asn149, Asn164, and Asn181 each carry an N-linked (GlcNAc...) asparagine glycan. Positions 189 and 207 each coordinate Zn(2+). An N-linked (GlcNAc...) asparagine glycan is attached at Asn232. Glu246 and Asp273 together coordinate Zn(2+). A disulfide bond links Cys322 and Cys326. His355 contacts Zn(2+).

The protein belongs to the peptidase M28 family. M28E subfamily. Monomer. Zn(2+) is required as a cofactor.

Its subcellular location is the secreted. Extracellular aminopeptidase that allows assimilation of proteinaceous substrates. The polypeptide is Leucine aminopeptidase 1 (LAP1) (Paracoccidioides brasiliensis (strain Pb03)).